Here is a 43-residue protein sequence, read N- to C-terminus: Thymosin beta-12 (43 aa).

Basic and acidic residues-rich tracts occupy residues 1 to 25 (MSDK…ETQE) and 33 to 43 (ETIEQEKQATA). A disordered region spans residues 1-43 (MSDKPDLAEVSNFDKTKLKKTETQEKNPLPTKETIEQEKQATA). Serine 2 is subject to N-acetylserine.

This sequence belongs to the thymosin beta family.

It localises to the cytoplasm. The protein localises to the cytoskeleton. Plays an important role in the organization of the cytoskeleton. Binds to and sequesters actin monomers (G actin) and therefore inhibits actin polymerization. The polypeptide is Thymosin beta-12 (Oncorhynchus mykiss (Rainbow trout)).